An 85-amino-acid polypeptide reads, in one-letter code: Colicin-E6 immunity protein (85 aa).

It belongs to the cloacin immunity protein family.

Its function is as follows. This protein inhibits the 16S RNA hydrolyzing activity of colicin E6 by binding with high affinity to the C-terminal catalytic domain of E6. This protein is able to protect a cell, which harbors the plasmid ColE6 against colicin E6. The polypeptide is Colicin-E6 immunity protein (imm) (Escherichia coli).